The primary structure comprises 269 residues: Hydroxyethylthiazole kinase (269 aa).

Residue methionine 46 coordinates substrate. Positions 122 and 168 each coordinate ATP. Glycine 195 provides a ligand contact to substrate.

It belongs to the Thz kinase family. Requires Mg(2+) as cofactor.

It carries out the reaction 5-(2-hydroxyethyl)-4-methylthiazole + ATP = 4-methyl-5-(2-phosphooxyethyl)-thiazole + ADP + H(+). It functions in the pathway cofactor biosynthesis; thiamine diphosphate biosynthesis; 4-methyl-5-(2-phosphoethyl)-thiazole from 5-(2-hydroxyethyl)-4-methylthiazole: step 1/1. Functionally, catalyzes the phosphorylation of the hydroxyl group of 4-methyl-5-beta-hydroxyethylthiazole (THZ). This Geobacillus thermodenitrificans (strain NG80-2) protein is Hydroxyethylthiazole kinase.